A 267-amino-acid polypeptide reads, in one-letter code: Undecaprenyl-diphosphatase (267 aa).

The next 7 helical transmembrane spans lie at 7 to 29, 41 to 61, 69 to 89, 96 to 116, 173 to 193, 207 to 227, and 239 to 259; these read LILG…HMIL, FWKS…IFVF, LDIW…GLFV, LFNG…FILI, AAEF…AYSI, IPLG…IKFF, and FGIY…SGIL.

The protein belongs to the UppP family.

Its subcellular location is the cell inner membrane. The catalysed reaction is di-trans,octa-cis-undecaprenyl diphosphate + H2O = di-trans,octa-cis-undecaprenyl phosphate + phosphate + H(+). Catalyzes the dephosphorylation of undecaprenyl diphosphate (UPP). Confers resistance to bacitracin. In Campylobacter jejuni subsp. jejuni serotype O:6 (strain 81116 / NCTC 11828), this protein is Undecaprenyl-diphosphatase.